The sequence spans 369 residues: tRNA/tmRNA (uracil-C(5))-methyltransferase (369 aa).

S-adenosyl-L-methionine is bound by residues Gln190, Tyr218, Asn223, Glu239, and Asp301. Catalysis depends on Cys326, which acts as the Nucleophile. Catalysis depends on Glu360, which acts as the Proton acceptor.

The protein belongs to the class I-like SAM-binding methyltransferase superfamily. RNA M5U methyltransferase family. TrmA subfamily.

The enzyme catalyses uridine(54) in tRNA + S-adenosyl-L-methionine = 5-methyluridine(54) in tRNA + S-adenosyl-L-homocysteine + H(+). It carries out the reaction uridine(341) in tmRNA + S-adenosyl-L-methionine = 5-methyluridine(341) in tmRNA + S-adenosyl-L-homocysteine + H(+). Dual-specificity methyltransferase that catalyzes the formation of 5-methyluridine at position 54 (m5U54) in all tRNAs, and that of position 341 (m5U341) in tmRNA (transfer-mRNA). The chain is tRNA/tmRNA (uracil-C(5))-methyltransferase from Vibrio cholerae serotype O1 (strain ATCC 39541 / Classical Ogawa 395 / O395).